The primary structure comprises 679 residues: Stress-70 protein, mitochondrial (679 aa).

Residues 1 to 46 (MISASRAVAARLVGAAASRGPTAARHQDGWNGLSHEAFRIVSRRDY) constitute a mitochondrion transit peptide. Positions 1 to 432 (MISASRAVAA…IQGGVLAGDV (432 aa)) are interaction with NFS1. Thr-63 and Asn-64 together coordinate ADP. The segment at 63–431 (TNSCVAVMEG…AIQGGVLAGD (369 aa)) is nucleotide-binding domain (NBD). Lys-76 is modified (N6-acetyllysine). The residue at position 87 (Thr-87) is a Phosphothreonine. Residues Lys-135 and Lys-138 each carry the N6-acetyllysine; alternate modification. Lys-135 and Lys-138 each carry N6-succinyllysine; alternate. Lys-143 is subject to N6-acetyllysine. Lys-206 carries the post-translational modification N6-acetyllysine; alternate. N6-succinyllysine; alternate is present on Lys-206. At Lys-206 the chain carries N6-malonyllysine; alternate. An N6-acetyllysine mark is found at Lys-234 and Lys-288. Lys-300 carries the N6-acetyllysine; alternate modification. Lys-300 carries the N6-succinyllysine; alternate modification. The ADP site is built by Glu-313, Lys-316, and Ser-320. Lys-368 is modified (N6-succinyllysine). Residues Gly-388 and Arg-391 each coordinate ADP. Lys-394 is subject to N6-succinyllysine. Position 408 is a phosphoserine (Ser-408). The tract at residues 432-441 (VTDVLLLDVT) is interdomain linker. The interval 432–679 (VTDVLLLDVT…QKEDQKEEKQ (248 aa)) is interaction with FXN and ISCU. Residues 442-679 (PLSLGIETLG…QKEDQKEEKQ (238 aa)) are substrate-binding domain (SBD). Arg-513 bears the Omega-N-methylarginine mark. Lys-567 and Lys-600 each carry N6-acetyllysine; alternate. N6-succinyllysine; alternate occurs at positions 567 and 600. Lys-610 carries the post-translational modification N6-succinyllysine. Lys-612 bears the N6-acetyllysine mark. Lys-646 carries the post-translational modification N6-acetyllysine; alternate. Lys-646 carries the N6-succinyllysine; alternate modification. The tract at residues 656–679 (ASEREGSGSSGTGEQKEDQKEEKQ) is disordered. A compositionally biased stretch (basic and acidic residues) spans 669–679 (EQKEDQKEEKQ).

It belongs to the heat shock protein 70 family. As to quaternary structure, interacts strongly with the intermediate form of FXN and weakly with its mature form. Interacts with HSCB. Associates with the mitochondrial contact site and cristae organizing system (MICOS) complex, composed of at least MICOS10/MIC10, CHCHD3/MIC19, CHCHD6/MIC25, APOOL/MIC27, IMMT/MIC60, APOO/MIC23/MIC26 and QIL1/MIC13. This complex was also known under the names MINOS or MitOS complex. The MICOS complex associates with mitochondrial outer membrane proteins SAMM50, MTX1, MTX2 and DNAJC11, mitochondrial inner membrane protein TMEM11 and with HSPA9. Interacts with DNLZ, the interaction is required to prevent self-aggregation. Interacts with TESPA1. Interacts with PDPN. Interacts with NFU1, NFS1 and ISCU. Interacts with TP53; the interaction promotes TP53 degradation. Interacts (via SBD domain) with UBXN2A; the interaction with UBXN2A inhibits HSPA9/MOT-2 interaction with and degradation of TP53, thereby promotes TP53 translocation to the nucleus. Interacts with ITPR1 AND VDAC1; this interaction couples ITPR1 to VDAC1. Component of the TIM23 mitochondrial inner membrane pre-sequence translocase complex.

The protein resides in the mitochondrion. It is found in the nucleus. Its subcellular location is the nucleolus. The protein localises to the cytoplasm. It localises to the mitochondrion matrix. The catalysed reaction is ATP + H2O = ADP + phosphate + H(+). The chaperone activity is regulated by ATP-induced allosteric coupling of the nucleotide-binding (NBD) and substrate-binding (SBD) domains. ATP binding in the nucleotide-binding pocket (NBP) leads to a conformational change in the NBD, which is transferred through the interdomain linker (IDL) to the substrate-binding domain (SBD). This elicits a reduced substrate affinity and a faster substrate exchange rate. Upon hydrolysis of ATP to ADP, the protein undergoes a conformational change that increases its affinity for substrate proteins. It cycles through repeated phases of ATP hydrolysis and nucleotide exchange, facilitating repeated cycles of substrate binding and release. Functions in collaboration with co-chaperones. Functions with the co-chaperone, DNLZ, to maintain solubility and regulate ATP hydrolysis. Nucleotide exchange factors, GRPEL1 and GRPEL2, accelerate nucleotide exchange. Functionally, mitochondrial chaperone that plays a key role in mitochondrial protein import, folding, and assembly. Plays an essential role in the protein quality control system, the correct folding of proteins, the re-folding of misfolded proteins, and the targeting of proteins for subsequent degradation. These processes are achieved through cycles of ATP binding, ATP hydrolysis, and ADP release, mediated by co-chaperones. In mitochondria, it associates with the TIM (translocase of the inner membrane) protein complex to assist in the import and folding of mitochondrial proteins. Plays an important role in mitochondrial iron-sulfur cluster (ISC) biogenesis, interacts with and stabilizes ISC cluster assembly proteins FXN, NFU1, NFS1 and ISCU. Regulates erythropoiesis via stabilization of ISC assembly. Regulates mitochondrial calcium-dependent apoptosis by coupling two calcium channels, ITPR1 and VDAC1, at the mitochondria-associated endoplasmic reticulum (ER) membrane to facilitate calcium transport from the ER lumen to the mitochondria intermembrane space, providing calcium for the downstream calcium channel MCU, which releases it into the mitochondrial matrix. Although primarily located in the mitochondria, it is also found in other cellular compartments. In the cytosol, it associates with proteins involved in signaling, apoptosis, or senescence. It may play a role in cell cycle regulation via its interaction with and promotion of degradation of TP53. May play a role in the control of cell proliferation and cellular aging. Protects against reactive oxygen species (ROS). Extracellular HSPA9 plays a cytoprotective role by preventing cell lysis following immune attack by the membrane attack complex by disrupting formation of the complex. The protein is Stress-70 protein, mitochondrial of Pongo abelii (Sumatran orangutan).